Consider the following 268-residue polypeptide: 4-hydroxy-tetrahydrodipicolinate reductase (268 aa).

8–13 (GAAGRM) is an NAD(+) binding site. Position 36 (Arg36) interacts with NADP(+). NAD(+)-binding positions include 99–101 (GTT) and 123–126 (AANF). Residue His156 is the Proton donor/acceptor of the active site. His157 provides a ligand contact to (S)-2,3,4,5-tetrahydrodipicolinate. Lys160 serves as the catalytic Proton donor. A (S)-2,3,4,5-tetrahydrodipicolinate-binding site is contributed by 166-167 (GT).

This sequence belongs to the DapB family.

It localises to the cytoplasm. It catalyses the reaction (S)-2,3,4,5-tetrahydrodipicolinate + NAD(+) + H2O = (2S,4S)-4-hydroxy-2,3,4,5-tetrahydrodipicolinate + NADH + H(+). It carries out the reaction (S)-2,3,4,5-tetrahydrodipicolinate + NADP(+) + H2O = (2S,4S)-4-hydroxy-2,3,4,5-tetrahydrodipicolinate + NADPH + H(+). It participates in amino-acid biosynthesis; L-lysine biosynthesis via DAP pathway; (S)-tetrahydrodipicolinate from L-aspartate: step 4/4. Functionally, catalyzes the conversion of 4-hydroxy-tetrahydrodipicolinate (HTPA) to tetrahydrodipicolinate. This is 4-hydroxy-tetrahydrodipicolinate reductase from Pseudomonas fluorescens (strain ATCC BAA-477 / NRRL B-23932 / Pf-5).